A 142-amino-acid chain; its full sequence is MPKYYCDYCDTFLTHDSPSVRKTHNGGRKHKDNVRMFYQKWMEDQAQKLVDQTARAFATNRMQGAVPRTTMGMAPVPPVGHHPMMGGPPGMPMMAPRPFPGPGVGFPGAPGMPPFPGGPMGMAGPPGMPPMMPRPPQQFRPM.

The segment at tyrosine 4–methionine 36 adopts a Matrin-type zinc-finger fold.

It belongs to the U1 small nuclear ribonucleoprotein C family. In terms of assembly, U1 snRNP is composed of the 7 core Sm proteins B/B', D1, D2, D3, E, F and G that assemble in a heptameric protein ring on the Sm site of the small nuclear RNA to form the core snRNP, and at least 3 U1 snRNP-specific proteins U1-70K, U1-A and U1-C. U1-C interacts with U1 snRNA and the 5' splice-site region of the pre-mRNA.

The protein localises to the nucleus. Functionally, component of the spliceosomal U1 snRNP, which is essential for recognition of the pre-mRNA 5' splice-site and the subsequent assembly of the spliceosome. U1-C is directly involved in initial 5' splice-site recognition for both constitutive and regulated alternative splicing. The interaction with the 5' splice-site seems to precede base-pairing between the pre-mRNA and the U1 snRNA. Stimulates commitment or early (E) complex formation by stabilizing the base pairing of the 5' end of the U1 snRNA and the 5' splice-site region. This chain is U1 small nuclear ribonucleoprotein C, found in Caenorhabditis elegans.